The following is an 821-amino-acid chain: Maternal DNA replication licensing factor mcm6 (821 aa).

A C4-type zinc finger spans residues 159–186 (CMDCQSVVKDVEQQFRYTQPTICKNPVC). The 208-residue stretch at 347-554 (LYHNLCTSLF…TDYAIARRIV (208 aa)) folds into the MCM domain. 397-404 (GDPSTSKS) provides a ligand contact to ATP. The short motif at 529–532 (SRFD) is the Arginine finger element.

Belongs to the MCM family. Component of the mcm2-7 complex (RLF-M). The complex forms a toroidal hexameric ring with the proposed subunit order mcm2-mcm6-mcm4-mcm7-mcm3-mcm5. The heterodimer of mmcm3/mcm5 interacts with mcm4, mmcm6, mcm7 and weakly with mcm2. Component of the CMG helicase complex, composed of the mcm2-7 complex, the GINS complex and cdc45.

Its subcellular location is the nucleus. It localises to the chromosome. The enzyme catalyses ATP + H2O = ADP + phosphate + H(+). Acts as a component of the mcm2-7 complex (mcm complex) which is the putative replicative helicase essential for 'once per cell cycle' DNA replication initiation and elongation in eukaryotic cells. The active ATPase sites in the mcm2-7 ring are formed through the interaction surfaces of two neighboring subunits such that a critical structure of a conserved arginine finger motif is provided in trans relative to the ATP-binding site of the Walker A box of the adjacent subunit. The six ATPase active sites, however, are likely to contribute differentially to the complex helicase activity. The existence of maternal and zygotic forms of mcm3 and mcm6 suggests that specific forms of mcm2-7 complexes may be used during different stages of development. In Xenopus tropicalis (Western clawed frog), this protein is Maternal DNA replication licensing factor mcm6.